We begin with the raw amino-acid sequence, 273 residues long: Large ribosomal subunit protein uL29m (273 aa).

Positions 247 to 258 are enriched in basic and acidic residues; that stretch reads PLRHDRWEKGQE. A disordered region spans residues 247–273; it reads PLRHDRWEKGQEENSGGETEDGNAPSN.

This sequence belongs to the universal ribosomal protein uL29 family. Component of the mitochondrial large ribosomal subunit. Mature mitochondrial ribosomes consist of a small (37S) and a large (54S) subunit. The 37S subunit contains at least 33 different proteins and 1 molecule of RNA (15S). The 54S subunit contains at least 45 different proteins and 1 molecule of RNA (21S).

The protein localises to the mitochondrion. The sequence is that of Large ribosomal subunit protein uL29m (mrpl4) from Aspergillus niger (strain ATCC MYA-4892 / CBS 513.88 / FGSC A1513).